Consider the following 330-residue polypeptide: Mucin-15 (330 aa).

The signal sequence occupies residues 1–23 (MLTSAKILLISILSSLLLFGSHG). A disordered region spans residues 23 to 115 (GEEGQKTNTT…SPRSPSTHSF (93 aa)). At 24-232 (EEGQKTNTTE…SDPQEENRNT (209 aa)) the chain is on the extracellular side. 15 N-linked (GlcNAc...) asparagine glycosylation sites follow: N30, N44, N54, N71, N79, N89, N94, N122, N138, N147, N154, N162, N175, N214, and N221. A compositionally biased stretch (polar residues) spans 42 to 56 (MENQSVPLESKANLT). Polar residues predominate over residues 86 to 115 (FYSNLSTDNSSRSPSLMPTLSPRSPSTHSF). A disordered region spans residues 164-185 (SITVSNLPSGPNTTSVTPMVTE). A helical transmembrane segment spans residues 233–253 (GVVFGAILGAILGASLLSLVG). Topologically, residues 254–330 (YLLCGKRKTD…DDIPPLRTSV (77 aa)) are cytoplasmic. Residues 279-330 (LRLDNAPEPYDMSFGNSSYYNPTANDSSTSAGGENAHDSIPMDDIPPLRTSV) are disordered. The segment covering 292–310 (FGNSSYYNPTANDSSTSAG) has biased composition (polar residues).

In terms of processing, highly glycosylated (N- and O-linked carbohydrates). In terms of tissue distribution, mainly expressed on apical surfaces of the mammary epithelial cells.

It localises to the cell membrane. The protein resides in the secreted. The protein is Mucin-15 (MUC15) of Bos taurus (Bovine).